The sequence spans 426 residues: Histidine--tRNA ligase (426 aa).

Belongs to the class-II aminoacyl-tRNA synthetase family. As to quaternary structure, homodimer.

The protein localises to the cytoplasm. It catalyses the reaction tRNA(His) + L-histidine + ATP = L-histidyl-tRNA(His) + AMP + diphosphate + H(+). This is Histidine--tRNA ligase from Streptococcus equi subsp. equi (strain 4047).